Here is a 115-residue protein sequence, read N- to C-terminus: Toxin-like structure LSTX-D1 (115 aa).

Residues 1–22 (MKVLVLFSVLFLTLFSYSSTEA) form the signal peptide. Residues 23–44 (IDEFDSDAEEDMLSLMANEQVR) constitute a propeptide that is removed on maturation. Cystine bridges form between Cys-48–Cys-63, Cys-55–Cys-72, Cys-62–Cys-87, and Cys-74–Cys-85.

The protein belongs to the neurotoxin 19 (CSTX) family. 01 subfamily. As to expression, expressed by the venom gland.

The protein localises to the secreted. This is Toxin-like structure LSTX-D1 from Lycosa singoriensis (Wolf spider).